A 321-amino-acid polypeptide reads, in one-letter code: Replication factor C small subunit (321 aa).

Position 43–50 (43–50) interacts with ATP; it reads GFAGVGKT.

This sequence belongs to the activator 1 small subunits family. RfcS subfamily. In terms of assembly, heteromultimer composed of small subunits (RfcS) and large subunits (RfcL).

In terms of biological role, part of the RFC clamp loader complex which loads the PCNA sliding clamp onto DNA. In Methanosphaera stadtmanae (strain ATCC 43021 / DSM 3091 / JCM 11832 / MCB-3), this protein is Replication factor C small subunit.